Consider the following 925-residue polypeptide: Protein translocase subunit SecA (925 aa).

ATP-binding positions include Gln-87, 105 to 109 (GEGKT), and Asp-515. 4 residues coordinate Zn(2+): Cys-909, Cys-911, Cys-920, and His-921.

Belongs to the SecA family. As to quaternary structure, monomer and homodimer. Part of the essential Sec protein translocation apparatus which comprises SecA, SecYEG and auxiliary proteins SecDF-YajC and YidC. Zn(2+) is required as a cofactor.

The protein resides in the cell inner membrane. It is found in the cytoplasm. The enzyme catalyses ATP + H2O + cellular proteinSide 1 = ADP + phosphate + cellular proteinSide 2.. Part of the Sec protein translocase complex. Interacts with the SecYEG preprotein conducting channel. Has a central role in coupling the hydrolysis of ATP to the transfer of proteins into and across the cell membrane, serving both as a receptor for the preprotein-SecB complex and as an ATP-driven molecular motor driving the stepwise translocation of polypeptide chains across the membrane. This is Protein translocase subunit SecA from Cupriavidus taiwanensis (strain DSM 17343 / BCRC 17206 / CCUG 44338 / CIP 107171 / LMG 19424 / R1) (Ralstonia taiwanensis (strain LMG 19424)).